We begin with the raw amino-acid sequence, 683 residues long: DNA-directed RNA polymerase subunit beta' (683 aa).

Zn(2+) contacts are provided by cysteine 69, cysteine 71, cysteine 87, and cysteine 90. Mg(2+)-binding residues include aspartate 489, aspartate 491, and aspartate 493.

Belongs to the RNA polymerase beta' chain family. RpoC1 subfamily. In terms of assembly, in plastids the minimal PEP RNA polymerase catalytic core is composed of four subunits: alpha, beta, beta', and beta''. When a (nuclear-encoded) sigma factor is associated with the core the holoenzyme is formed, which can initiate transcription. Mg(2+) is required as a cofactor. The cofactor is Zn(2+).

It localises to the plastid. It is found in the chloroplast. The catalysed reaction is RNA(n) + a ribonucleoside 5'-triphosphate = RNA(n+1) + diphosphate. DNA-dependent RNA polymerase catalyzes the transcription of DNA into RNA using the four ribonucleoside triphosphates as substrates. The chain is DNA-directed RNA polymerase subunit beta' from Zea mays (Maize).